Reading from the N-terminus, the 1454-residue chain is ABC transporter G family member 43 (1454 aa).

Positions Ala23–Asp47 are disordered. Positions Ser25 to Ala44 are enriched in basic and acidic residues. Residue Asn163 is glycosylated (N-linked (GlcNAc...) asparagine). One can recognise an ABC transporter 1 domain in the interval Glu170–Glu444. Gly204–Ser211 serves as a coordination point for ATP. Asn393 carries N-linked (GlcNAc...) asparagine glycosylation. In terms of domain architecture, ABC transmembrane type-2 1 spans Leu524–Phe735. 6 consecutive transmembrane segments (helical) span residues Phe540 to Phe560, Val577 to Leu597, Phe613 to Leu630, Leu637 to Phe656, Phe659 to Ile679, and Val684 to Leu704. N-linked (GlcNAc...) asparagine glycosylation occurs at Asn745. Residues Ile775 to Phe795 form a helical membrane-spanning segment. The segment at Thr804–Gln823 is disordered. N-linked (GlcNAc...) asparagine glycans are attached at residues Asn829 and Asn832. The ABC transporter 2 domain occupies Leu852–Pro1104. Position 897–904 (Gly897–Thr904) interacts with ATP. N-linked (GlcNAc...) asparagine glycosylation occurs at Asn951. An ABC transmembrane type-2 2 domain is found at Gln1178–Phe1391. 7 helical membrane passes run Tyr1196 to Trp1216, Tyr1236 to Val1256, Phe1284 to Tyr1304, Phe1314 to Ala1334, Leu1341 to Ile1361, Trp1372 to Ala1392, and Phe1423 to Gly1443.

The protein belongs to the ABC transporter superfamily. ABCG family. PDR (TC 3.A.1.205) subfamily. As to expression, specifically expressed in the vasculature of roots, stems, panicles, sheaths and leaves.

The protein localises to the cell membrane. Functionally, ABC transporter modulating cadmium (Cd) import, thus controlling Cd(2+) accumulation to prevent phytotoxicity. Confers high tolerance to Cd in yeast. Prevents leaf bacteria proliferation, such as Xanthomonas oryzae pv. oryzicola (Xoc) RS105 and X.oryzae pv. oryzae (Xoo) PXO99, by triggering Cd accumulation, which in turn impairs bacterial virulence factors. This is ABC transporter G family member 43 from Oryza sativa subsp. japonica (Rice).